We begin with the raw amino-acid sequence, 731 residues long: Pre-B-cell leukemia transcription factor-interacting protein 1 (731 aa).

Polar residues predominate over residues 1–10 (MASCPDSDNS). Residues 1-155 (MASCPDSDNS…SSSDDDTDVD (155 aa)) are disordered. The residue at position 43 (Ser-43) is a Phosphoserine. Composition is skewed to polar residues over residues 62 to 75 (LFQTESPQSGSILT) and 121 to 132 (LEGQSPPQSLPS). 4 positions are modified to phosphoserine: Ser-129, Ser-146, Ser-147, and Ser-148. Thr-152 is modified (phosphothreonine). Positions 270-348 (LLLDKLAKEN…QGLEADCVRG (79 aa)) form a coiled coil. 3 disordered regions span residues 354–377 (LSGGRGPQGDKAIREQGPREQEPE), 447–572 (GQDP…DPLP), and 698–731 (LKKRSGKKDKHSQSPRAAGPREGHSHSHHHHHRG). The span at 364–375 (KAIREQGPREQE) shows a compositional bias: basic and acidic residues. A coiled-coil region spans residues 377 to 417 (ELSFLKQKEQLEAEAQALRQELERQRRLLGSVQQDLERSLQ). 3 stretches are compositionally biased toward basic and acidic residues: residues 472-499 (WSGKEKWWDGQRDRKAEHWKHKKEESGR), 508-543 (QEDREPAGRWKEGRPRVEESGSKKEGKRQGPKEPPR), and 551-569 (SGEKQKQPRWREGTKDSHD). Positions 485-505 (RKAEHWKHKKEESGRERKKNW) match the Nuclear localization signal motif. Residue Ser-567 is modified to Phosphoserine. The short motif at 695-720 (DKALKKRSGKKDKHSQSPRAAGPREG) is the Nuclear localization signal element. Basic residues predominate over residues 698–707 (LKKRSGKKDK).

As to quaternary structure, interacts with TEX11. Interacts with ESR1, PBX1, PBX2 and PBX3. Expressed in early hematopoietic precursors.

It localises to the cytoplasm. The protein resides in the cytoskeleton. Its subcellular location is the nucleus. In terms of biological role, regulator of pre-B-cell leukemia transcription factors (BPXs) function. Inhibits the binding of PBX1-HOX complex to DNA and blocks the transcriptional activity of E2A-PBX1. Tethers estrogen receptor-alpha (ESR1) to microtubules and allows them to influence estrogen receptors-alpha signaling. This is Pre-B-cell leukemia transcription factor-interacting protein 1 (PBXIP1) from Homo sapiens (Human).